A 471-amino-acid polypeptide reads, in one-letter code: MKIKTRFAPSPTGYLHVGGARTALYSWLFARHHGGEFVLRIEDTDLERSTPEAIEAIMDGMNWLNLEWDEGPYFQTKRFDRYNAVIDEMLEAGTAYKCYCSKERLEQLREEQMAKGEKPRYDGRCRHSYEHHADDEPCVVRFANPQDGSVIFDDQIRGPIEFSNQELDDLIIRRTDGSPTYNFCVVVDDWDMEITHVIRGEDHINNTPRQINILKALNAPVPMYAHVSMINGDDGKKLSKRHGAVSVMQYRDDGYLPEALLNYLVRLGWSSGDQEIFTREEMIKLFSLGAVSKSASAFNTDKLLWLNHHYINTLEPEYVATHLQWHIEQENIDTRNGPQLAELVKLLGERCKTLKEMAQSCRYFYEDFSEFDADAAKKHLRPVARQPLEVVRDKLSAITDWSAENVHHAIQATADELEVGMGKVGMPLRVAVTGAGQSPALDVTVHAIGKTRSIERINKALGFIAERESQQ.

The 'HIGH' region motif lies at 9-19 (PSPTGYLHVGG). Residues cysteine 98, cysteine 100, cysteine 125, and histidine 127 each coordinate Zn(2+). Positions 237-241 (KLSKR) match the 'KMSKS' region motif. Lysine 240 contacts ATP.

The protein belongs to the class-I aminoacyl-tRNA synthetase family. Glutamate--tRNA ligase type 1 subfamily. As to quaternary structure, monomer. Zn(2+) serves as cofactor.

The protein resides in the cytoplasm. The enzyme catalyses tRNA(Glu) + L-glutamate + ATP = L-glutamyl-tRNA(Glu) + AMP + diphosphate. In terms of biological role, catalyzes the attachment of glutamate to tRNA(Glu) in a two-step reaction: glutamate is first activated by ATP to form Glu-AMP and then transferred to the acceptor end of tRNA(Glu). In Salmonella gallinarum (strain 287/91 / NCTC 13346), this protein is Glutamate--tRNA ligase.